A 126-amino-acid chain; its full sequence is Fluoride-specific ion channel FluC (126 aa).

4 helical membrane-spanning segments follow: residues Phe-4–Val-24, Tyr-38–Phe-58, Ile-71–Val-91, and Leu-104–Leu-124. Na(+)-binding residues include Gly-78 and Thr-81.

Belongs to the fluoride channel Fluc/FEX (TC 1.A.43) family.

It is found in the cell inner membrane. It catalyses the reaction fluoride(in) = fluoride(out). Its activity is regulated as follows. Na(+) is not transported, but it plays an essential structural role and its presence is essential for fluoride channel function. Its function is as follows. Fluoride-specific ion channel. Important for reducing fluoride concentration in the cell, thus reducing its toxicity. The chain is Fluoride-specific ion channel FluC from Vibrio vulnificus (strain CMCP6).